We begin with the raw amino-acid sequence, 429 residues long: Putative pentatricopeptide repeat-containing protein At1g03510 (429 aa).

PPR repeat units lie at residues 11–45 (KLISLTKQLSSYANQGNHEQALNLFLQMHSSFALP), 47–81 (DAHVFSLALKSCAAAFRPVLGGSVHAHSVKSNFLS), 82–112 (NPFVGCALLDMYGKCLSVSHARKLFDEIPQR), 113–147 (NAVVWNAMISHYTHCGKVKEAVELYEAMDVMPNES), 148–180 (SFNAIIKGLVGTEDGSYRAIEFYRKMIEFRFKP), 181–215 (NLITLLALVSACSAIGAFRLIKEIHSYAFRNLIEP), 216–246 (HPQLKSGLVEAYGRCGSIVYVQLVFDSMEDR), 247–281 (DVVAWSSLISAYALHGDAESALKTFQEMELAKVTP), 282–312 (DDIAFLNVLKACSHAGLADEALVYFKRMQGD), and 318–348 (SKDHYSCLVDVLSRVGRFEEAYKVIQAMPEK). Residues 353-428 (TWGALLGACR…SPGSSWCLFK (76 aa)) are type E motif.

It belongs to the PPR family. PCMP-E subfamily.

The chain is Putative pentatricopeptide repeat-containing protein At1g03510 (PCMP-E3) from Arabidopsis thaliana (Mouse-ear cress).